The primary structure comprises 218 residues: Insulin-induced gene 2 protein (218 aa).

Topologically, residues 1–21 are cytoplasmic; sequence MGDRENVSYGSRPILAQKMNL. A helical transmembrane segment spans residues 22–44; the sequence is LLRGFLLFLIGVFLALVLNLLQV. Topologically, residues 45 to 63 are lumenal; the sequence is QRNVTLFPPDVLSSLFSSA. Residues 64–81 traverse the membrane as a helical segment; that stretch reads WWVPLCCGTAAAAIGLLY. The Cytoplasmic portion of the chain corresponds to 82–96; sequence PCIDRHLGEPHKFKR. Residues 97-119 form a helical membrane-spanning segment; that stretch reads EWSSVMRCVAVFVGINHASAKVD. Residues 120 to 122 lie on the Lumenal side of the membrane; the sequence is FAN. Residues 123 to 141 traverse the membrane as a helical segment; sequence NMQLSLTLAALSIGLWWTF. The Cytoplasmic segment spans residues 142–146; the sequence is DRSRS. A helical membrane pass occupies residues 147-168; it reads GLGLGIGISFFATLVSQLLVYN. The Lumenal segment spans residues 169–182; that stretch reads GVYEYTAPDFLYVR. Residues 183 to 200 traverse the membrane as a helical segment; the sequence is SWLPCIFFAGGITMGNIG. At 201–218 the chain is on the cytoplasmic side; sequence RQLEMYERKALVEKSHRD. Positions 212–218 match the KxHxx motif; the sequence is VEKSHRD.

The protein belongs to the INSIG family. Interacts with scap; interaction is direct and only takes place in the presence of sterols; it prevents interaction between scap and the coat protein complex II (COPII). Associates with the SCAP-SREBP complex; association is mediated via its interaction with scap and only takes place in the presence of sterols.

It is found in the endoplasmic reticulum membrane. Functionally, oxysterol-binding protein that mediates feedback control of cholesterol synthesis by controlling both endoplasmic reticulum to Golgi transport of scap and degradation of hmgcr. Acts as a negative regulator of cholesterol biosynthesis by mediating the retention of the SCAP-SREBP complex in the endoplasmic reticulum, thereby blocking the processing of sterol regulatory element-binding proteins (SREBPs). Binds oxysterol, including 22-hydroxycholesterol, 24-hydroxycholesterol, 25-hydroxycholesterol and 27-hydroxycholesterol, regulating interaction with scap and retention of the SCAP-SREBP complex in the endoplasmic reticulum. In presence of oxysterol, interacts with scap, retaining the SCAP-SREBP complex in the endoplasmic reticulum, thereby preventing scap from escorting SREBPs to the Golgi. Sterol deprivation reduce oxysterol-binding, disrupting the interaction between insig2 and scap, thereby promoting Golgi transport of the SCAP-SREBP complex, followed by processing and nuclear translocation of SREBPs. Also regulates cholesterol synthesis by regulating degradation of hmgcr. This chain is Insulin-induced gene 2 protein, found in Xenopus laevis (African clawed frog).